The sequence spans 524 residues: Origin of replication complex subunit 5 (524 aa).

A compositionally biased stretch (low complexity) spans 1–19; it reads MSQPVTPRRTTRSSASASP. The segment at 1-56 is disordered; that stretch reads MSQPVTPRRTTRSSASASPSPAPASPTSPPKSRPKPSPRRQLLAAAAAPPKEDGSS. The span at 20–31 shows a compositional bias: pro residues; the sequence is SPAPASPTSPPK. Residues 39 to 49 show a composition bias toward low complexity; sequence RRQLLAAAAAP. 90–97 lines the ATP pocket; sequence GGAATGKT.

This sequence belongs to the ORC5 family. As to quaternary structure, component of the origin recognition complex (ORC) composed of at least ORC1, ORC2, ORC3, ORC4, ORC5 and ORC6. ORC is regulated in a cell-cycle and development dependent manner. It is sequentially assembled at the exit from anaphase of mitosis and disassembled as cells enter S phase.

The protein localises to the nucleus. Component of the origin recognition complex (ORC) that binds origins of replication. DNA-binding is ATP-dependent. The specific DNA sequences that define origins of replication have not been identified yet. ORC is required to assemble the pre-replication complex necessary to initiate DNA replication. This is Origin of replication complex subunit 5 from Oryza sativa subsp. indica (Rice).